Reading from the N-terminus, the 533-residue chain is CTP synthase (533 aa).

Residues 1–264 (MKYIFVTGGV…GKLVTEKLNL (264 aa)) form an amidoligase domain region. Serine 12 contributes to the CTP binding site. Residue serine 12 coordinates UTP. ATP contacts are provided by residues 13–18 (SLGKGI) and aspartate 70. Mg(2+) is bound by residues aspartate 70 and glutamate 138. Residues 145 to 147 (DIE), 185 to 190 (KTKPTQ), and lysine 221 each bind CTP. UTP contacts are provided by residues 185-190 (KTKPTQ) and lysine 221. 237 to 239 (KDA) provides a ligand contact to ATP. The Glutamine amidotransferase type-1 domain maps to 289 to 533 (TIGIVGKYIE…HGLVKASIEK (245 aa)). Glycine 357 lines the L-glutamine pocket. Cysteine 384 functions as the Nucleophile; for glutamine hydrolysis in the catalytic mechanism. L-glutamine contacts are provided by residues 385-388 (LGMQ), glutamate 407, and arginine 464. Active-site residues include histidine 509 and glutamate 511.

The protein belongs to the CTP synthase family. In terms of assembly, homotetramer.

It catalyses the reaction UTP + L-glutamine + ATP + H2O = CTP + L-glutamate + ADP + phosphate + 2 H(+). The catalysed reaction is L-glutamine + H2O = L-glutamate + NH4(+). It carries out the reaction UTP + NH4(+) + ATP = CTP + ADP + phosphate + 2 H(+). It functions in the pathway pyrimidine metabolism; CTP biosynthesis via de novo pathway; CTP from UDP: step 2/2. Allosterically activated by GTP, when glutamine is the substrate; GTP has no effect on the reaction when ammonia is the substrate. The allosteric effector GTP functions by stabilizing the protein conformation that binds the tetrahedral intermediate(s) formed during glutamine hydrolysis. Inhibited by the product CTP, via allosteric rather than competitive inhibition. In terms of biological role, catalyzes the ATP-dependent amination of UTP to CTP with either L-glutamine or ammonia as the source of nitrogen. Regulates intracellular CTP levels through interactions with the four ribonucleotide triphosphates. This chain is CTP synthase, found in Methanococcus maripaludis (strain DSM 14266 / JCM 13030 / NBRC 101832 / S2 / LL).